The following is a 98-amino-acid chain: Defensin-B (98 aa).

A signal peptide spans 1-20 (MKSITVICFLALCTVAITSA). Positions 21–58 (YPQEPVLADEARPFANSLFDELPEETYQAAVENFRLKR) are excised as a propeptide. 3 disulfide bridges follow: Cys-61–Cys-88, Cys-74–Cys-94, and Cys-78–Cys-96.

This sequence belongs to the invertebrate defensin family. Type 1 subfamily.

The protein localises to the secreted. In terms of biological role, antibacterial peptide mostly active against Gram-positive bacteria. The protein is Defensin-B (DEFB) of Aedes aegypti (Yellowfever mosquito).